Reading from the N-terminus, the 161-residue chain is Ubiquitin-conjugating enzyme E2Q-like protein 1 (161 aa).

Residues 1 to 154 form the UBC core domain; the sequence is MKELQDIARL…VKTHEKYGWV (154 aa). The active-site Glycyl thioester intermediate is C88.

It belongs to the ubiquitin-conjugating enzyme family. Interacts with FBXW7.

It is found in the nucleus. The enzyme catalyses S-ubiquitinyl-[E1 ubiquitin-activating enzyme]-L-cysteine + [E2 ubiquitin-conjugating enzyme]-L-cysteine = [E1 ubiquitin-activating enzyme]-L-cysteine + S-ubiquitinyl-[E2 ubiquitin-conjugating enzyme]-L-cysteine.. Its pathway is protein modification; protein ubiquitination. Its function is as follows. Probable E2 ubiquitin-protein ligase that catalyzes the covalent attachment of ubiquitin to target proteins. May facilitate the monoubiquitination and degradation of MTOR and CCNE1 through interaction with FBXW7. The polypeptide is Ubiquitin-conjugating enzyme E2Q-like protein 1 (Ube2ql1) (Mus musculus (Mouse)).